A 204-amino-acid chain; its full sequence is MIFKDVGVIGYAEALRIQEQLVAEVQQGGEEALLLLEHLPVYTIGAGGDRGNVLDPELEPVRVNRGGDVTYHGPGQLVCYPILDLSRRGRDLHRYLRFLERFLVELCAGLGVGCHTVPGRTGVWTGNGKLASIGVGVRRWVSMHGFALNVSPDTAPFSRINPCGMPGCSITSLSLELGEELFVDELKEMVAIRFQPLLNLHLPR.

Positions 27–202 constitute a BPL/LPL catalytic domain; it reads QGGEEALLLL…RFQPLLNLHL (176 aa). Residues 65–72, 132–134, and 145–147 contribute to the substrate site; these read RGGDVTYH, SIG, and GFA. Cysteine 163 acts as the Acyl-thioester intermediate in catalysis.

Belongs to the LipB family.

The protein localises to the cytoplasm. The catalysed reaction is octanoyl-[ACP] + L-lysyl-[protein] = N(6)-octanoyl-L-lysyl-[protein] + holo-[ACP] + H(+). The protein operates within protein modification; protein lipoylation via endogenous pathway; protein N(6)-(lipoyl)lysine from octanoyl-[acyl-carrier-protein]: step 1/2. In terms of biological role, catalyzes the transfer of endogenously produced octanoic acid from octanoyl-acyl-carrier-protein onto the lipoyl domains of lipoate-dependent enzymes. Lipoyl-ACP can also act as a substrate although octanoyl-ACP is likely to be the physiological substrate. This chain is Octanoyltransferase, found in Citrifermentans bemidjiense (strain ATCC BAA-1014 / DSM 16622 / JCM 12645 / Bem) (Geobacter bemidjiensis).